A 73-amino-acid polypeptide reads, in one-letter code: Translation initiation factor IF-1 (73 aa).

Residues 1–73 enclose the S1-like domain; it reads MAKKDGVIEI…NRGRIVYRYR (73 aa).

Belongs to the IF-1 family. In terms of assembly, component of the 30S ribosomal translation pre-initiation complex which assembles on the 30S ribosome in the order IF-2 and IF-3, IF-1 and N-formylmethionyl-tRNA(fMet); mRNA recruitment can occur at any time during PIC assembly.

It is found in the cytoplasm. One of the essential components for the initiation of protein synthesis. Stabilizes the binding of IF-2 and IF-3 on the 30S subunit to which N-formylmethionyl-tRNA(fMet) subsequently binds. Helps modulate mRNA selection, yielding the 30S pre-initiation complex (PIC). Upon addition of the 50S ribosomal subunit IF-1, IF-2 and IF-3 are released leaving the mature 70S translation initiation complex. This chain is Translation initiation factor IF-1, found in Acidothermus cellulolyticus (strain ATCC 43068 / DSM 8971 / 11B).